The following is a 72-amino-acid chain: Small, acid-soluble spore protein 1 (72 aa).

This sequence belongs to the alpha/beta-type SASP family.

SASP are bound to spore DNA. They are double-stranded DNA-binding proteins that cause DNA to change to an a-like conformation. They protect the DNA backbone from chemical and enzymatic cleavage and are thus involved in dormant spore's high resistance to UV light. The chain is Small, acid-soluble spore protein 1 (Sh-1) from Halobacillus halophilus (strain ATCC 35676 / DSM 2266 / JCM 20832 / KCTC 3685 / LMG 17431 / NBRC 102448 / NCIMB 2269) (Sporosarcina halophila).